Reading from the N-terminus, the 946-residue chain is Bifunctional glutamine synthetase adenylyltransferase/adenylyl-removing enzyme (946 aa).

The adenylyl removase stretch occupies residues 1 to 440 (MKPLSSPLQQ…VFNELIGDDE (440 aa)). The tract at residues 449–946 (SEHWRELWQD…ASWQKWLVAG (498 aa)) is adenylyl transferase.

This sequence belongs to the GlnE family. Mg(2+) is required as a cofactor.

The catalysed reaction is [glutamine synthetase]-O(4)-(5'-adenylyl)-L-tyrosine + phosphate = [glutamine synthetase]-L-tyrosine + ADP. It carries out the reaction [glutamine synthetase]-L-tyrosine + ATP = [glutamine synthetase]-O(4)-(5'-adenylyl)-L-tyrosine + diphosphate. Functionally, involved in the regulation of glutamine synthetase GlnA, a key enzyme in the process to assimilate ammonia. When cellular nitrogen levels are high, the C-terminal adenylyl transferase (AT) inactivates GlnA by covalent transfer of an adenylyl group from ATP to specific tyrosine residue of GlnA, thus reducing its activity. Conversely, when nitrogen levels are low, the N-terminal adenylyl removase (AR) activates GlnA by removing the adenylyl group by phosphorolysis, increasing its activity. The regulatory region of GlnE binds the signal transduction protein PII (GlnB) which indicates the nitrogen status of the cell. This chain is Bifunctional glutamine synthetase adenylyltransferase/adenylyl-removing enzyme, found in Citrobacter koseri (strain ATCC BAA-895 / CDC 4225-83 / SGSC4696).